Here is a 250-residue protein sequence, read N- to C-terminus: ATP synthase subunit a (250 aa).

Transmembrane regions (helical) follow at residues 29-49, 84-104, 114-134, 143-163, 193-213, and 216-236; these read ASLF…FATS, FFPL…LGMF, IIVT…YGFY, VFVP…IEII, FVAS…LPLI, and VALT…FAVL.

It belongs to the ATPase A chain family. F-type ATPases have 2 components, CF(1) - the catalytic core - and CF(0) - the membrane proton channel. CF(1) has five subunits: alpha(3), beta(3), gamma(1), delta(1), epsilon(1). CF(0) has three main subunits: a(1), b(2) and c(9-12). The alpha and beta chains form an alternating ring which encloses part of the gamma chain. CF(1) is attached to CF(0) by a central stalk formed by the gamma and epsilon chains, while a peripheral stalk is formed by the delta and b chains.

The protein resides in the cell inner membrane. In terms of biological role, key component of the proton channel; it plays a direct role in the translocation of protons across the membrane. The chain is ATP synthase subunit a from Rhizobium johnstonii (strain DSM 114642 / LMG 32736 / 3841) (Rhizobium leguminosarum bv. viciae).